Consider the following 492-residue polypeptide: Aspartyl/glutamyl-tRNA(Asn/Gln) amidotransferase subunit B (492 aa).

This sequence belongs to the GatB/GatE family. GatB subfamily. In terms of assembly, heterotrimer of A, B and C subunits.

It catalyses the reaction L-glutamyl-tRNA(Gln) + L-glutamine + ATP + H2O = L-glutaminyl-tRNA(Gln) + L-glutamate + ADP + phosphate + H(+). It carries out the reaction L-aspartyl-tRNA(Asn) + L-glutamine + ATP + H2O = L-asparaginyl-tRNA(Asn) + L-glutamate + ADP + phosphate + 2 H(+). Allows the formation of correctly charged Asn-tRNA(Asn) or Gln-tRNA(Gln) through the transamidation of misacylated Asp-tRNA(Asn) or Glu-tRNA(Gln) in organisms which lack either or both of asparaginyl-tRNA or glutaminyl-tRNA synthetases. The reaction takes place in the presence of glutamine and ATP through an activated phospho-Asp-tRNA(Asn) or phospho-Glu-tRNA(Gln). The polypeptide is Aspartyl/glutamyl-tRNA(Asn/Gln) amidotransferase subunit B (Pelagibacter ubique (strain HTCC1062)).